The primary structure comprises 424 residues: Glutamyl-tRNA(Gln) amidotransferase subunit D (424 aa).

The disordered stretch occupies residues 58-79 (NTNGGLNGGKEHKTAGEEVQKS). The span at 66-78 (GKEHKTAGEEVQK) shows a compositional bias: basic and acidic residues. In terms of domain architecture, Asparaginase/glutaminase spans 84-406 (PKVAILSTGG…LGQTDEFNEA (323 aa)). Active-site residues include T94, T170, D171, and K247.

Belongs to the asparaginase 1 family. GatD subfamily. In terms of assembly, heterodimer of GatD and GatE.

It carries out the reaction L-glutamyl-tRNA(Gln) + L-glutamine + ATP + H2O = L-glutaminyl-tRNA(Gln) + L-glutamate + ADP + phosphate + H(+). Its function is as follows. Allows the formation of correctly charged Gln-tRNA(Gln) through the transamidation of misacylated Glu-tRNA(Gln) in organisms which lack glutaminyl-tRNA synthetase. The reaction takes place in the presence of glutamine and ATP through an activated gamma-phospho-Glu-tRNA(Gln). The GatDE system is specific for glutamate and does not act on aspartate. This Methanosarcina barkeri (strain Fusaro / DSM 804) protein is Glutamyl-tRNA(Gln) amidotransferase subunit D.